Consider the following 249-residue polypeptide: Diaminopimelate epimerase (249 aa).

Residues Asn11 and Asn60 each coordinate substrate. The Proton donor role is filled by Cys69. Substrate-binding positions include 70–71 (GN), Asn164, and 182–183 (ER). The Proton acceptor role is filled by Cys192. A substrate-binding site is contributed by 193-194 (GT).

It belongs to the diaminopimelate epimerase family. In terms of assembly, homodimer.

Its subcellular location is the cytoplasm. The enzyme catalyses (2S,6S)-2,6-diaminopimelate = meso-2,6-diaminopimelate. It functions in the pathway amino-acid biosynthesis; L-lysine biosynthesis via DAP pathway; DL-2,6-diaminopimelate from LL-2,6-diaminopimelate: step 1/1. In terms of biological role, catalyzes the stereoinversion of LL-2,6-diaminopimelate (L,L-DAP) to meso-diaminopimelate (meso-DAP), a precursor of L-lysine and an essential component of the bacterial peptidoglycan. The polypeptide is Diaminopimelate epimerase (Campylobacter jejuni (strain RM1221)).